An 83-amino-acid chain; its full sequence is Small ribosomal subunit protein bS20 (83 aa).

A disordered region spans residues 60–83 (ASKGLIHKNKASRDKSRLAAKLAN).

Belongs to the bacterial ribosomal protein bS20 family.

Its function is as follows. Binds directly to 16S ribosomal RNA. The chain is Small ribosomal subunit protein bS20 from Streptococcus thermophilus (strain CNRZ 1066).